Reading from the N-terminus, the 296-residue chain is Glycine--tRNA ligase alpha subunit (296 aa).

Belongs to the class-II aminoacyl-tRNA synthetase family. As to quaternary structure, tetramer of two alpha and two beta subunits.

It is found in the cytoplasm. It carries out the reaction tRNA(Gly) + glycine + ATP = glycyl-tRNA(Gly) + AMP + diphosphate. The chain is Glycine--tRNA ligase alpha subunit from Synechococcus sp. (strain CC9605).